We begin with the raw amino-acid sequence, 258 residues long: Homeobox protein VENTX (258 aa).

A compositionally biased stretch (polar residues) spans 1–32 (MRLSSSPPRGPQQLSSFGSVDWLSQSSCSGPT). Disordered stretches follow at residues 1–93 (MRLS…RAPR) and 227–248 (SHPP…PRGL). A DNA-binding region (homeobox) is located at residues 91 to 150 (APRVRTAFTMEQVRTLEGVFQHHQYLSPLERKRLAREMQLSEVQIKTWFQNRRMKHKRQM).

As to expression, expressed in bone marrow of patients recovering from chemotherapy. Also expressed in an erythroleukemia cell line.

The protein localises to the nucleus. Functionally, may be involved in ventralization. This Homo sapiens (Human) protein is Homeobox protein VENTX (VENTX).